Here is a 382-residue protein sequence, read N- to C-terminus: Lipid-A-disaccharide synthase (382 aa).

Belongs to the LpxB family.

It catalyses the reaction 2-N,3-O-bis[(3R)-3-hydroxytetradecanoyl]-alpha-D-glucosaminyl 1-phosphate + UDP-2-N,3-O-bis[(3R)-3-hydroxytetradecanoyl]-alpha-D-glucosamine = lipid A disaccharide (E. coli) + UDP + H(+). The catalysed reaction is a lipid X + a UDP-2-N,3-O-bis[(3R)-3-hydroxyacyl]-alpha-D-glucosamine = a lipid A disaccharide + UDP + H(+). It functions in the pathway glycolipid biosynthesis; lipid IV(A) biosynthesis; lipid IV(A) from (3R)-3-hydroxytetradecanoyl-[acyl-carrier-protein] and UDP-N-acetyl-alpha-D-glucosamine: step 5/6. In terms of biological role, condensation of UDP-2,3-diacylglucosamine and 2,3-diacylglucosamine-1-phosphate to form lipid A disaccharide, a precursor of lipid A, a phosphorylated glycolipid that anchors the lipopolysaccharide to the outer membrane of the cell. The polypeptide is Lipid-A-disaccharide synthase (Salmonella paratyphi A (strain AKU_12601)).